A 215-amino-acid chain; its full sequence is uncharacterized protein (215 aa).

Active-site charge relay system residues include Ser-114, Asp-162, and His-194.

Belongs to the AB hydrolase superfamily. AB hydrolase 2 family.

This is an uncharacterized protein from Rickettsia typhi (strain ATCC VR-144 / Wilmington).